Consider the following 398-residue polypeptide: NADH-ubiquinone oxidoreductase 49 kDa subunit (398 aa).

Belongs to the complex I 49 kDa subunit family.

It localises to the mitochondrion. The enzyme catalyses a ubiquinone + NADH + 5 H(+)(in) = a ubiquinol + NAD(+) + 4 H(+)(out). Its function is as follows. Core subunit of the mitochondrial membrane respiratory chain NADH dehydrogenase (Complex I) that is believed to belong to the minimal assembly required for catalysis. Complex I functions in the transfer of electrons from NADH to the respiratory chain. The immediate electron acceptor for the enzyme is believed to be ubiquinone. Component of the iron-sulfur (IP) fragment of the enzyme. Component of the iron-sulfur (IP) fragment of the enzyme. This chain is NADH-ubiquinone oxidoreductase 49 kDa subunit (NAD7), found in Cafeteria roenbergensis (Marine flagellate).